Consider the following 279-residue polypeptide: Large ribosomal subunit protein uL2 (279 aa).

A disordered region spans residues 224-279 (AMNPIDHPHGGGEGRTSGGRHPVTPWGKGTKGNRTRKSKASDKLIVRSRHAKKKGR). A compositionally biased stretch (basic residues) spans 269–279 (VRSRHAKKKGR).

Belongs to the universal ribosomal protein uL2 family. Part of the 50S ribosomal subunit. Forms a bridge to the 30S subunit in the 70S ribosome.

Its function is as follows. One of the primary rRNA binding proteins. Required for association of the 30S and 50S subunits to form the 70S ribosome, for tRNA binding and peptide bond formation. It has been suggested to have peptidyltransferase activity; this is somewhat controversial. Makes several contacts with the 16S rRNA in the 70S ribosome. In Cereibacter sphaeroides (strain ATCC 17029 / ATH 2.4.9) (Rhodobacter sphaeroides), this protein is Large ribosomal subunit protein uL2.